Reading from the N-terminus, the 1592-residue chain is Serine/threonine-protein kinase mrck-1 (1592 aa).

Residues Met1 to Met954 form an involved in homo-dimerization region. The 269-residue stretch at Phe83–Phe351 folds into the Protein kinase domain. ATP is bound by residues Ile89 to Val97 and Lys112. Asp207 acts as the Proton acceptor in catalysis. The AGC-kinase C-terminal domain occupies Glu352–Arg426. Ser415 is subject to Phosphoserine. Tyr416 carries the post-translational modification Phosphotyrosine. Coiled coils occupy residues Glu444 to Ser782 and Leu811 to Ser871. Polar residues predominate over residues Ser782–Gly796. Residues Ser782 to Arg801 form a disordered region. Residues Glu955–Ser1534 are involved in binding to membranes, with a preference for di-phosphorylated phosphoinositides (PIPs). The Phorbol-ester/DAG-type zinc-finger motif lies at Gly957 to Cys1007. Zn(2+) is bound by residues His958, Cys971, Cys974, Cys988, Cys991, His996, Cys999, and Cys1007. In terms of domain architecture, PH spans Gly1026 to Thr1154. One can recognise a CNH domain in the interval Ile1181–Ser1479. In terms of domain architecture, CRIB spans Ile1544–Gly1557. An involved in interaction with cdc-42 (GTP-bound). Deletion prevents rescue of a null mutant; furthermore deleted form of mrck-1 is no longer recruited to the cell cortex and instead appears to be completely cytoplasmic region spans residues Ile1544–Gly1557.

This sequence belongs to the protein kinase superfamily. AGC Ser/Thr protein kinase family. DMPK subfamily. As to quaternary structure, homodimer, via N-terminal domains. Interacts (via the CRIB domain) with cdc-42 (GTP-bound), but with a lower affinity for cdc-42 bound to GDP; the interaction is direct and may play a role in the recruitment of mrck-1 to the apical membrane. It depends on Mg(2+) as a cofactor. In terms of tissue distribution, expressed in embryonic and L4 larval seam cells and in embryonic dorsal and ventral epidermal cells. Also expressed in the pharynx throughout development and in sublateral nerve cords in the L4 larva.

The protein resides in the cytoplasm. Its subcellular location is the cell cortex. It carries out the reaction L-seryl-[protein] + ATP = O-phospho-L-seryl-[protein] + ADP + H(+). The catalysed reaction is L-threonyl-[protein] + ATP = O-phospho-L-threonyl-[protein] + ADP + H(+). Its function is as follows. Serine/threonine-protein kinase. Involved in regulating endoderm precursor cell movements during early gastrulation; activates apical myosin and thereby increases actomyosin contractility and tension in the apical cell cortex, probably as a result of recruitment of mrck-1 to the cortex by a combination of interaction with active cdc-42 and membrane binding. May phosphorylate and inactivate the phosphatase mel-11, and thereby contribute to the regulation of myosin II contractility during embryonic elongation. Involved in controlling canal length and Golgi/ER integrity during excretory canal elongation. In Caenorhabditis elegans, this protein is Serine/threonine-protein kinase mrck-1.